A 199-amino-acid chain; its full sequence is Photosystem I reaction center subunit XI (199 aa).

Transmembrane regions (helical) follow at residues leucine 108–leucine 128 and phenylalanine 165–leucine 185.

This sequence belongs to the PsaL family.

The protein resides in the cellular thylakoid membrane. The sequence is that of Photosystem I reaction center subunit XI from Prochlorococcus marinus (strain MIT 9301).